Here is a 292-residue protein sequence, read N- to C-terminus: UTP--glucose-1-phosphate uridylyltransferase (292 aa).

This sequence belongs to the UDPGP type 2 family.

It catalyses the reaction alpha-D-glucose 1-phosphate + UTP + H(+) = UDP-alpha-D-glucose + diphosphate. In terms of biological role, may play a role in stationary phase survival. This Mycoplasma genitalium (strain ATCC 33530 / DSM 19775 / NCTC 10195 / G37) (Mycoplasmoides genitalium) protein is UTP--glucose-1-phosphate uridylyltransferase (galU).